The sequence spans 260 residues: Exosome complex component Rrp4 (260 aa).

Residues 59–128 enclose the S1 motif domain; it reads NDVVIGVVIV…SSMKIELALR (70 aa). The KH domain maps to 136–194; it reads RTGQIVEVEPVKVPRVIGHGGSMISMLKKETNCSIFVGQNGRIWIDGKDEDIELLSKAL.

Belongs to the RRP4 family. In terms of assembly, component of the archaeal exosome complex. Forms a trimer of Rrp4 and/or Csl4 subunits. The trimer associates with a hexameric ring-like arrangement composed of 3 Rrp41-Rrp42 heterodimers.

The protein localises to the cytoplasm. Non-catalytic component of the exosome, which is a complex involved in RNA degradation. Increases the RNA binding and the efficiency of RNA degradation. Confers strong poly(A) specificity to the exosome. In Methanosarcina mazei (strain ATCC BAA-159 / DSM 3647 / Goe1 / Go1 / JCM 11833 / OCM 88) (Methanosarcina frisia), this protein is Exosome complex component Rrp4.